The sequence spans 344 residues: UDP-3-O-acylglucosamine N-acyltransferase (344 aa).

His-248 (proton acceptor) is an active-site residue.

Belongs to the transferase hexapeptide repeat family. LpxD subfamily. In terms of assembly, homotrimer.

It carries out the reaction a UDP-3-O-[(3R)-3-hydroxyacyl]-alpha-D-glucosamine + a (3R)-hydroxyacyl-[ACP] = a UDP-2-N,3-O-bis[(3R)-3-hydroxyacyl]-alpha-D-glucosamine + holo-[ACP] + H(+). Its pathway is bacterial outer membrane biogenesis; LPS lipid A biosynthesis. Its function is as follows. Catalyzes the N-acylation of UDP-3-O-acylglucosamine using 3-hydroxyacyl-ACP as the acyl donor. Is involved in the biosynthesis of lipid A, a phosphorylated glycolipid that anchors the lipopolysaccharide to the outer membrane of the cell. The protein is UDP-3-O-acylglucosamine N-acyltransferase of Prochlorococcus marinus (strain MIT 9515).